The primary structure comprises 505 residues: RNA-splicing ligase RtcB homolog (505 aa).

The Mn(2+) site is built by aspartate 119, cysteine 122, histidine 227, histidine 259, and histidine 353. A GMP-binding site is contributed by 226 to 230 (NHYAE). Residues 353 to 354 (HN), 402 to 405 (GGTM), serine 409, 428 to 431 (HGAG), and lysine 504 each bind GMP. The GMP-histidine intermediate role is filled by histidine 428.

Belongs to the RtcB family. As to quaternary structure, catalytic component of the tRNA-splicing ligase complex. Requires Mn(2+) as cofactor.

The catalysed reaction is a 3'-end 3'-phospho-ribonucleotide-RNA + a 5'-end dephospho-ribonucleoside-RNA + GTP = a ribonucleotidyl-ribonucleotide-RNA + GMP + diphosphate. It catalyses the reaction a 3'-end 2',3'-cyclophospho-ribonucleotide-RNA + a 5'-end dephospho-ribonucleoside-RNA + GTP + H2O = a ribonucleotidyl-ribonucleotide-RNA + GMP + diphosphate + H(+). In terms of biological role, catalytic subunit of the tRNA-splicing ligase complex that acts by directly joining spliced tRNA halves to mature-sized tRNAs by incorporating the precursor-derived splice junction phosphate into the mature tRNA as a canonical 3',5'-phosphodiester. May act as an RNA ligase with broad substrate specificity, and may function toward other RNAs. The sequence is that of RNA-splicing ligase RtcB homolog from Nematostella vectensis (Starlet sea anemone).